A 198-amino-acid chain; its full sequence is Glycerol-3-phosphate acyltransferase (198 aa).

The next 5 membrane-spanning stretches (helical) occupy residues 5-25 (LILL…LWIG), 56-76 (SIVT…PFFF), 84-104 (FWLL…FAGF), 114-134 (AGVI…IFLL), and 158-178 (LFMG…FVVW).

It belongs to the PlsY family. Probably interacts with PlsX.

The protein localises to the cell membrane. The enzyme catalyses an acyl phosphate + sn-glycerol 3-phosphate = a 1-acyl-sn-glycero-3-phosphate + phosphate. It functions in the pathway lipid metabolism; phospholipid metabolism. Its function is as follows. Catalyzes the transfer of an acyl group from acyl-phosphate (acyl-PO(4)) to glycerol-3-phosphate (G3P) to form lysophosphatidic acid (LPA). This enzyme utilizes acyl-phosphate as fatty acyl donor, but not acyl-CoA or acyl-ACP. The chain is Glycerol-3-phosphate acyltransferase from Listeria welshimeri serovar 6b (strain ATCC 35897 / DSM 20650 / CCUG 15529 / CIP 8149 / NCTC 11857 / SLCC 5334 / V8).